Reading from the N-terminus, the 254-residue chain is 4-hydroxy-tetrahydrodipicolinate reductase (254 aa).

Residue 7 to 12 (GASGRI) coordinates NAD(+). Arginine 35 is a binding site for NADP(+). Residues 91–93 (GTT) and 115–118 (AHNM) each bind NAD(+). Histidine 147 serves as the catalytic Proton donor/acceptor. Histidine 148 is a (S)-2,3,4,5-tetrahydrodipicolinate binding site. Lysine 151 functions as the Proton donor in the catalytic mechanism. 157–158 (GT) is a (S)-2,3,4,5-tetrahydrodipicolinate binding site.

This sequence belongs to the DapB family.

It is found in the cytoplasm. The enzyme catalyses (S)-2,3,4,5-tetrahydrodipicolinate + NAD(+) + H2O = (2S,4S)-4-hydroxy-2,3,4,5-tetrahydrodipicolinate + NADH + H(+). The catalysed reaction is (S)-2,3,4,5-tetrahydrodipicolinate + NADP(+) + H2O = (2S,4S)-4-hydroxy-2,3,4,5-tetrahydrodipicolinate + NADPH + H(+). It participates in amino-acid biosynthesis; L-lysine biosynthesis via DAP pathway; (S)-tetrahydrodipicolinate from L-aspartate: step 4/4. Its function is as follows. Catalyzes the conversion of 4-hydroxy-tetrahydrodipicolinate (HTPA) to tetrahydrodipicolinate. The chain is 4-hydroxy-tetrahydrodipicolinate reductase from Helicobacter acinonychis (strain Sheeba).